The following is a 721-amino-acid chain: Ophiobolin F synthase oblA (721 aa).

The interval Y5–E325 is (7Z)-ophiobola-7,19-dien-3-ol synthase. Residues D97 and D101 each coordinate Mg(2+). Residue D97 participates in substrate binding. A DDXXD 1 motif is present at residues D97–D101. Substrate contacts are provided by residues R185 to D188, N229, S233 to E237, and R316 to Y317. The NSE/DTE signature appears at N229 to E237. A geranylfarnesyl diphosphate synthase region spans residues L326–V721. Residues S348–P387 are disordered. A compositionally biased stretch (low complexity) spans V372–V384. The isopentenyl diphosphate site is built by K432, R435, and H464. The Mg(2+) site is built by D471 and D475. The DDXXD 2 motif lies at D471–D475. Dimethylallyl diphosphate is bound at residue R480. R481 lines the isopentenyl diphosphate pocket. Positions 558, 559, 597, 604, 614, and 624 each coordinate dimethylallyl diphosphate.

The protein in the N-terminal section; belongs to the terpene synthase family. This sequence in the C-terminal section; belongs to the FPP/GGPP synthase family. The cofactor is Mg(2+).

It carries out the reaction isopentenyl diphosphate + (2E,6E)-farnesyl diphosphate = (2E,6E,10E)-geranylgeranyl diphosphate + diphosphate. It catalyses the reaction isopentenyl diphosphate + (2E,6E,10E)-geranylgeranyl diphosphate = (2E,6E,10E,14E)-geranylfarnesyl diphosphate + diphosphate. The catalysed reaction is (2E,6E,10E,14E)-geranylfarnesyl diphosphate + H2O = ophiobolin F + diphosphate. Its pathway is secondary metabolite biosynthesis; terpenoid biosynthesis. In terms of biological role, bifunctional sesterterpene synthase; part of the gene cluster that mediates the biosynthesis of the sesterterpenes ophiobolins, fungal phytotoxins with potential anti-cancer activities. The first step of the pathway is performed by the sesterterpene synthase oblA that possesses both prenyl transferase and terpene cyclase activity, converting isopentenyl diphosphate and dimethylallyl diphosphate into geranylfarnesyl diphosphate (GFPP) and further converting GFPP into ophiobolin F, respectively. Other sesterterpenoids (C(25) terpenoids) are found as minor products of oblA. The cytochrome P450 monooxygenase oblB then catalyzes a four-step oxidative transformation of ophiobolin F to yield ophiobolin C. The FAD-dependent oxidoreductase oblC might be involved in a later oxidation step that produces ophiobolin A. The polypeptide is Ophiobolin F synthase oblA (Cochliobolus heterostrophus (strain C5 / ATCC 48332 / race O) (Southern corn leaf blight fungus)).